The sequence spans 307 residues: Acetaldehyde dehydrogenase (307 aa).

Catalysis depends on Cys-131, which acts as the Acyl-thioester intermediate. NAD(+) is bound by residues 162 to 170 (SIGPGTRKN) and Asn-273.

This sequence belongs to the acetaldehyde dehydrogenase family.

It catalyses the reaction acetaldehyde + NAD(+) + CoA = acetyl-CoA + NADH + H(+). The protein is Acetaldehyde dehydrogenase (nahO) of Stutzerimonas stutzeri (Pseudomonas stutzeri).